The sequence spans 528 residues: Importin subunit alpha-2 (528 aa).

Residues M1 to P15 show a composition bias toward low complexity. Residues M1–R36 are disordered. 8 ARM repeats span residues V125–A165, E167–G206, A209–K248, K253–A292, S294–A335, D338–A383, F386–V425, and V438–R477.

Belongs to the importin alpha family. In terms of assembly, forms a complex with importin subunit beta-1. The whole complex, most stable and composed of importin alpha, importin beta and NLS substrate, is referred to as PTAC or pore targeting complex. In terms of tissue distribution, expressed in root, callus, and etiolated leaf. Low expression in green leaf.

Its subcellular location is the cytoplasm. It is found in the perinuclear region. Its function is as follows. Binds specifically and directly to substrates containing either a simple or bipartite NLS motif. Promotes docking of import substrates to the nuclear envelope. This is Importin subunit alpha-2 from Oryza sativa subsp. japonica (Rice).